The chain runs to 126 residues: Fluoride-specific ion channel FluC (126 aa).

The next 4 membrane-spanning stretches (helical) occupy residues 4-24 (ILAI…IGLW), 35-55 (YGTF…LTLI), 68-88 (MLVT…YESF), and 100-120 (IGYM…GVGL). The Na(+) site is built by glycine 75 and threonine 78.

The protein belongs to the fluoride channel Fluc/FEX (TC 1.A.43) family.

Its subcellular location is the cell membrane. It catalyses the reaction fluoride(in) = fluoride(out). Its activity is regulated as follows. Na(+) is not transported, but it plays an essential structural role and its presence is essential for fluoride channel function. In terms of biological role, fluoride-specific ion channel. Important for reducing fluoride concentration in the cell, thus reducing its toxicity. This Chloroflexus aurantiacus (strain ATCC 29366 / DSM 635 / J-10-fl) protein is Fluoride-specific ion channel FluC.